Consider the following 70-residue polypeptide: Putative membrane protein insertion efficiency factor (70 aa).

This sequence belongs to the UPF0161 family.

It localises to the cell inner membrane. In terms of biological role, could be involved in insertion of integral membrane proteins into the membrane. The protein is Putative membrane protein insertion efficiency factor of Sphingopyxis alaskensis (strain DSM 13593 / LMG 18877 / RB2256) (Sphingomonas alaskensis).